The chain runs to 230 residues: ATP synthase subunit a (230 aa).

5 helical membrane-spanning segments follow: residues 17 to 37, 78 to 98, 107 to 127, 165 to 187, and 198 to 218; these read LPIT…FIMA, IFPF…IGVI, DLSV…WFGI, LFGN…GFLV, and EAII…AGGI.

It belongs to the ATPase A chain family. F-type ATPases have 2 components, CF(1) - the catalytic core - and CF(0) - the membrane proton channel. CF(1) has five subunits: alpha(3), beta(3), gamma(1), delta(1), epsilon(1). CF(0) has three main subunits: a(1), b(2) and c(9-12). The alpha and beta chains form an alternating ring which encloses part of the gamma chain. CF(1) is attached to CF(0) by a central stalk formed by the gamma and epsilon chains, while a peripheral stalk is formed by the delta and b chains.

The protein resides in the cell inner membrane. Key component of the proton channel; it plays a direct role in the translocation of protons across the membrane. The protein is ATP synthase subunit a of Legionella pneumophila (strain Corby).